We begin with the raw amino-acid sequence, 712 residues long: Nucleolin (712 aa).

Residues 1–305 (MVKLAKAGKN…KKQKVEGTEP (305 aa)) are disordered. Lysine 9, lysine 15, and lysine 16 each carry N6-acetyllysine. Positions 24–43 (VEEDSEDEEMSEDEEDDSSG) are enriched in acidic residues. Serine 28, serine 34, serine 41, and serine 42 each carry phosphoserine. Residues 56 to 107 (AAATSAKKVVVSPTKKVAVATPAKKAAVTPGKKAAATPAKKTVTPAKAVTTP) show a composition bias toward low complexity. Repeat 1 spans residues 58–65 (ATSAKKVV). The tract at residues 58 to 135 (ATSAKKVVVS…GAAIPAKGAK (78 aa)) is 8 X 8 AA tandem repeats of X-T-P-X-K-K-X-X. The residue at position 67 (serine 67) is a Phosphoserine. Residues threonine 69, threonine 76, threonine 84, and threonine 92 each carry the phosphothreonine modification. 3 consecutive repeat copies span residues 75–82 (ATPAKKAA), 83–90 (VTPGKKAA), and 91–98 (ATPAKKTV). Lysine 96 is modified (N6-acetyllysine). Threonine 99 is subject to Phosphothreonine. The stretch at 99–104 (TPAKAV) is one 5; truncated repeat. At lysine 102 the chain carries N6-acetyllysine. The stretch at 105 to 112 (TTPGKKGA) is repeat 6. Threonine 106 bears the Phosphothreonine mark. Lysine 109 carries the N6-acetyllysine modification. Threonine 113 is subject to Phosphothreonine. At lysine 116 the chain carries N6-acetyllysine. A run of 2 repeats spans residues 120–127 (ATPGKKGA) and 128–135 (AIPAKGAK). Threonine 121 is modified (phosphothreonine). Positions 122-137 (PGKKGAAIPAKGAKNG) are enriched in low complexity. Position 124 is an N6-acetyllysine (lysine 124). Phosphoserine occurs at positions 145 and 153. Over residues 145–171 (SDEEEEDDSEEDEDDDEDEDEDEDEIE) the composition is skewed to acidic residues. A compositionally biased stretch (low complexity) spans 172–183 (PAAMKAAAAAPA). Phosphoserine is present on residues serine 184 and serine 206. Positions 184 to 211 (SEDEDDEDDEDDEDEDDDEEDDSEEEAM) are enriched in acidic residues. A Phosphothreonine modification is found at threonine 214. Residues 234–274 (EDEDEEEDDEDEDDDDDDDDDDEDDEDEDDEEEEEEEEEEP) are compositionally biased toward acidic residues. A compositionally biased stretch (basic and acidic residues) spans 275–302 (VKEAPGKRKKEMAKQKAAPEAKKQKVEG). A Glycyl lysine isopeptide (Lys-Gly) (interchain with G-Cter in SUMO1); alternate cross-link involves residue lysine 299. Lysine 299 is covalently cross-linked (Glycyl lysine isopeptide (Lys-Gly) (interchain with G-Cter in SUMO2); alternate). Threonine 303 is subject to Phosphothreonine. 2 consecutive RRM domains span residues 309-385 (FNLF…KPKG) and 395-468 (RTLL…YTGE). N6-acetyllysine is present on lysine 320. Residue lysine 326 forms a Glycyl lysine isopeptide (Lys-Gly) (interchain with G-Cter in SUMO1); alternate linkage. A Glycyl lysine isopeptide (Lys-Gly) (interchain with G-Cter in SUMO2); alternate cross-link involves residue lysine 326. Position 350 is an N6-acetyllysine (lysine 350). Position 358 is a phosphoserine (serine 358). At threonine 369 the chain carries Phosphothreonine. A Glycyl lysine isopeptide (Lys-Gly) (interchain with G-Cter in SUMO2) cross-link involves residue lysine 372. Lysine 379 is covalently cross-linked (Glycyl lysine isopeptide (Lys-Gly) (interchain with G-Cter in SUMO2); alternate). Lysine 379 is modified (N6-acetyllysine; alternate). 2 positions are modified to N6-acetyllysine: lysine 400 and lysine 405. Phosphothreonine is present on threonine 407. N6-acetyllysine occurs at positions 429 and 446. Phosphoserine occurs at positions 460 and 462. An N6-acetyllysine mark is found at lysine 469 and lysine 479. Positions 488–562 (KTLVLSNLSY…RAIRLELQGP (75 aa)) constitute an RRM 3 domain. Lysine 515 participates in a covalent cross-link: Glycyl lysine isopeptide (Lys-Gly) (interchain with G-Cter in SUMO2); alternate. Lysine 515 carries the post-translational modification N6-acetyllysine; alternate. At lysine 523 the chain carries N6-acetyllysine. Phosphoserine is present on serine 565. N6-acetyllysine is present on lysine 574. An RRM 4 domain is found at 574–649 (KTLFVKGLSE…NKVTLDWAKP (76 aa)). Lysine 579 is covalently cross-linked (Glycyl lysine isopeptide (Lys-Gly) (interchain with G-Cter in SUMO2); alternate). Lysine 579 carries the N6-acetyllysine; alternate modification. Serine 582 is modified (phosphoserine). Residue lysine 591 forms a Glycyl lysine isopeptide (Lys-Gly) (interchain with G-Cter in SUMO1); alternate linkage. Lysine 591 is covalently cross-linked (Glycyl lysine isopeptide (Lys-Gly) (interchain with G-Cter in SUMO2); alternate). Residues serine 593 and serine 621 each carry the phosphoserine modification. A Glycyl lysine isopeptide (Lys-Gly) (interchain with G-Cter in SUMO2) cross-link involves residue lysine 626. Residues 642-712 (VTLDWAKPKG…KPQGKKTKFE (71 aa)) are disordered. The residue at position 648 (lysine 648) is an N6-acetyllysine. A compositionally biased stretch (gly residues) spans 652-698 (EGGFGGRGGGRGGFGGRGGGRGGRGGFGGRGRGGFGGRGGFRGGRGG). Asymmetric dimethylarginine is present on residues arginine 658, arginine 662, arginine 668, arginine 672, arginine 675, arginine 681, arginine 683, arginine 689, and arginine 693. Position 696 is an asymmetric dimethylarginine; alternate (arginine 696). An Omega-N-methylarginine; alternate modification is found at arginine 696. Residues 699-712 (GGDHKPQGKKTKFE) are compositionally biased toward basic and acidic residues.

In terms of assembly, identified in a IGF2BP1-dependent mRNP granule complex containing untranslated mRNAs. Component of the SWAP complex that consists of NPM1, NCL/nucleolin, PARP1 and SWAP70. Component of a complex which is at least composed of HTATSF1/Tat-SF1, the P-TEFb complex components CDK9 and CCNT1, RNA polymerase II, SUPT5H, and NCL/nucleolin. Interacts with AICDA. Interacts with APTX. Interacts with C1QBP. Interacts with ERBB4. Interacts (via C-terminus) with FMR1 isoform 6 (via N-terminus). Interacts with GZF1; this interaction is important for nucleolar localization of GZF1. Interacts with NSUN2. Interacts with NVL. Interacts (via N-terminus domain) with SETX. Interacts (via RRM1 and C-terminal RRM4/Arg/Gly-rich domains) with TERT; the interaction is important for nucleolar localization of TERT. Interacts with WDR46. Interacts with ZFP36. Interacts with LRRC34. Interacts with RRP1B. Interacts with HNRNPU; this interaction occurs during mitosis. Interacts with RIOK1; RIOK1 recruits NCL to the PRMT5 for symmetrically methylation. Interacts with ZBTB7B. Interacts with MDK; this interaction promotes NCL clustering and lateral movements of this complex into lipid rafts leading to MDK internalization. Interacts with HDGF. Interacts with ALKBH2. Interacts with IGFBP5; this interaction is necessary for IGFBP5 localization to the nucleus. Interacts with DDX24 (when ubiquitinated); this interaction may be important during ribosome biogenesis. In terms of processing, some glutamate residues are glycylated by TTLL8. This modification occurs exclusively on glutamate residues and results in a glycine chain on the gamma-carboxyl group. Post-translationally, symmetrically methylated by PRMT5.

It is found in the nucleus. The protein resides in the nucleolus. Its subcellular location is the cytoplasm. Nucleolin is the major nucleolar protein of growing eukaryotic cells. It is found associated with intranucleolar chromatin and pre-ribosomal particles. It induces chromatin decondensation by binding to histone H1. It is thought to play a role in pre-rRNA transcription and ribosome assembly. May play a role in the process of transcriptional elongation. Binds RNA oligonucleotides with 5'-UUAGGG-3' repeats more tightly than the telomeric single-stranded DNA 5'-TTAGGG-3' repeats. The polypeptide is Nucleolin (NCL) (Pongo abelii (Sumatran orangutan)).